Reading from the N-terminus, the 372-residue chain is Alanine racemase (372 aa).

The Proton acceptor; specific for D-alanine role is filled by lysine 36. Lysine 36 bears the N6-(pyridoxal phosphate)lysine mark. Arginine 134 is a substrate binding site. The Proton acceptor; specific for L-alanine role is filled by tyrosine 266. Substrate is bound at residue methionine 314.

This sequence belongs to the alanine racemase family. It depends on pyridoxal 5'-phosphate as a cofactor.

It catalyses the reaction L-alanine = D-alanine. It functions in the pathway amino-acid biosynthesis; D-alanine biosynthesis; D-alanine from L-alanine: step 1/1. In terms of biological role, catalyzes the interconversion of L-alanine and D-alanine. May also act on other amino acids. The polypeptide is Alanine racemase (alr) (Nitratidesulfovibrio vulgaris (strain DSM 19637 / Miyazaki F) (Desulfovibrio vulgaris)).